The chain runs to 420 residues: Tyrosine-protein phosphatase non-receptor type 20 (420 aa).

Residues 1–11 are compositionally biased toward basic and acidic residues; the sequence is MSSPRDFRAEP. Disordered regions lie at residues 1 to 47 and 68 to 108; these read MSSP…VFEN and DVFE…SQAL. Residues 31–41 are compositionally biased toward polar residues; it reads LPSSSQENTPR. 2 positions are modified to phosphoserine: S76 and S120. Positions 159–412 constitute a Tyrosine-protein phosphatase domain; that stretch reads IMQEFMALEL…HFCYDIVLEV (254 aa). Substrate is bound by residues D323, 353–359, and Q397; that span reads CSAGIGR. The Phosphocysteine intermediate role is filled by C353.

Belongs to the protein-tyrosine phosphatase family. Non-receptor class subfamily. Present in many cell lines (at protein level). Widely expressed.

The protein resides in the nucleus. Its subcellular location is the cytoplasm. The protein localises to the cytoskeleton. It is found in the microtubule organizing center. It localises to the centrosome. It catalyses the reaction O-phospho-L-tyrosyl-[protein] + H2O = L-tyrosyl-[protein] + phosphate. Functionally, tyrosine-protein phosphatase targeted to sites of actin polymerization in response of varied extracellular stimuli. Has tyrosine phosphatase activity towards various tyrosyl phosphorylated substrates. This Homo sapiens (Human) protein is Tyrosine-protein phosphatase non-receptor type 20.